The primary structure comprises 284 residues: Bifunctional protein FolD (284 aa).

Residues 166 to 168 (GAS), Ser-191, and Ile-232 contribute to the NADP(+) site.

Belongs to the tetrahydrofolate dehydrogenase/cyclohydrolase family. Homodimer.

It carries out the reaction (6R)-5,10-methylene-5,6,7,8-tetrahydrofolate + NADP(+) = (6R)-5,10-methenyltetrahydrofolate + NADPH. The catalysed reaction is (6R)-5,10-methenyltetrahydrofolate + H2O = (6R)-10-formyltetrahydrofolate + H(+). The protein operates within one-carbon metabolism; tetrahydrofolate interconversion. In terms of biological role, catalyzes the oxidation of 5,10-methylenetetrahydrofolate to 5,10-methenyltetrahydrofolate and then the hydrolysis of 5,10-methenyltetrahydrofolate to 10-formyltetrahydrofolate. The sequence is that of Bifunctional protein FolD from Neisseria meningitidis serogroup A / serotype 4A (strain DSM 15465 / Z2491).